We begin with the raw amino-acid sequence, 146 residues long: D-aminoacyl-tRNA deacylase (146 aa).

Residues 137 to 138 (GP) carry the Gly-cisPro motif, important for rejection of L-amino acids motif.

Belongs to the DTD family. In terms of assembly, homodimer.

The protein localises to the cytoplasm. It carries out the reaction glycyl-tRNA(Ala) + H2O = tRNA(Ala) + glycine + H(+). The catalysed reaction is a D-aminoacyl-tRNA + H2O = a tRNA + a D-alpha-amino acid + H(+). Its function is as follows. An aminoacyl-tRNA editing enzyme that deacylates mischarged D-aminoacyl-tRNAs. Also deacylates mischarged glycyl-tRNA(Ala), protecting cells against glycine mischarging by AlaRS. Acts via tRNA-based rather than protein-based catalysis; rejects L-amino acids rather than detecting D-amino acids in the active site. By recycling D-aminoacyl-tRNA to D-amino acids and free tRNA molecules, this enzyme counteracts the toxicity associated with the formation of D-aminoacyl-tRNA entities in vivo and helps enforce protein L-homochirality. In Thermodesulfovibrio yellowstonii (strain ATCC 51303 / DSM 11347 / YP87), this protein is D-aminoacyl-tRNA deacylase.